The sequence spans 288 residues: Proteasome assembly chaperone 1 (288 aa).

The disordered stretch occupies residues 1–33; the sequence is MATFFGEVQSVFSRAVDEEEEDEDDDEEEEEDR. Residues 17–33 show a composition bias toward acidic residues; it reads DEEEEDEDDDEEEEEDR.

Belongs to the PSMG1 family. Forms a heterodimer with psmg2. Degraded by the proteasome upon completion of 20S proteasome maturation.

The protein resides in the cytoplasm. The protein localises to the endoplasmic reticulum. Chaperone protein which promotes assembly of the 20S proteasome as part of a heterodimer with psmg2. This Xenopus laevis (African clawed frog) protein is Proteasome assembly chaperone 1.